Reading from the N-terminus, the 267-residue chain is DNA damage-regulated autophagy modulator protein 2 (267 aa).

6 helical membrane-spanning segments follow: residues 8–28 (LSFLPSALVIWTFATFIFSYI), 53–73 (RCLFGVMLNIAAVLGIATIYV), 87–107 (LIIKLNKAGLVLGILSCLGLS), 118–138 (FIVHVCGAVLAFSMGSFYMFV), 160–180 (LLLVIWCGVSALSMMTCSSIL), and 203–223 (VLHIVTTAAEWSMSFSFFGFF).

This sequence belongs to the DRAM/TMEM150 family.

It is found in the lysosome membrane. It localises to the photoreceptor inner segment. The protein resides in the apical cell membrane. Functionally, plays a role in the initiation of autophagy. In the retina, might be involved in the process of photoreceptor cells renewal and recycling to preserve visual function. Induces apoptotic cell death when coexpressed with DRAM1. The chain is DNA damage-regulated autophagy modulator protein 2 (Dram2) from Rattus norvegicus (Rat).